The following is a 677-amino-acid chain: MHHLLEQSADMATALLAGEKLRELILPGSQDDKAGALAALLLQLKLELPFDRVVTIGTVLVPILLVTLVFTKNFAEEPIYCYTPHNFTRDQALYARGYCWTELRDALPGVDASLWPSLFEHKFLPYALLAFAAIMYVPALGWEFLASTRLTSELNFLLQEIDNCYHRAAEGRAPKIEKQIQSKGPGITEREKREIIENAEKEKSPEQNLFEKYLERRGRSNFLAKLYLARHVLILLLSVVPISYLCTYYATQKQNEFTCALGASPDGPVGSAGPTVRVSCKLPSVQLQRIIAGVDIVLLCFMNLIILVNLIHLFIFRKSNFIFDKLNKVGIKTRRQWRRSQFCDINILAMFCNENRDHIKSLNRLDFITNESDLMYDNVVRQLLAALAQSNHDTTPTVRDSGIQTVDPSINPAEPDGSAEPPVVKRPRKKMKWIPTSNPLPQPFKEQLAIMRVENSKTEKPKPVRRKTATDTLIAPLLDAGARAAHHYKGSGGDSGPSSAPPAASEKKHTRHFSLDVHPYILGTKKAKTEAVPPALPASRSQEGGFLSQTEECGLGLAAAPTKDAPLPEKEIPYPTEPALPGLPSGGSFHVCSPPAAPAAASLSPGSLGKADPLTILSRNATHPLLHISTLYEAREEEEGGPCAPSDMGDLLSIPPPQQILIATFEEPRTVVSTVEF.

Over 11–53 the chain is Cytoplasmic; that stretch reads MATALLAGEKLRELILPGSQDDKAGALAALLLQLKLELPFDRV. A helical membrane pass occupies residues 54–74; the sequence is VTIGTVLVPILLVTLVFTKNF. At 75–125 the chain is on the extracellular side; the sequence is AEEPIYCYTPHNFTRDQALYARGYCWTELRDALPGVDASLWPSLFEHKFLP. N-linked (GlcNAc...) asparagine glycosylation occurs at N86. The chain crosses the membrane as a helical span at residues 126–146; that stretch reads YALLAFAAIMYVPALGWEFLA. The Cytoplasmic portion of the chain corresponds to 147 to 230; that stretch reads STRLTSELNF…NFLAKLYLAR (84 aa). A helical membrane pass occupies residues 231 to 251; that stretch reads HVLILLLSVVPISYLCTYYAT. The Extracellular segment spans residues 252–295; sequence QKQNEFTCALGASPDGPVGSAGPTVRVSCKLPSVQLQRIIAGVD. The chain crosses the membrane as a helical span at residues 296-316; the sequence is IVLLCFMNLIILVNLIHLFIF. Over 317-617 the chain is Cytoplasmic; it reads RKSNFIFDKL…LGKADPLTIL (301 aa). The segment covering 394 to 408 has biased composition (polar residues); it reads TTPTVRDSGIQTVDP. 2 disordered regions span residues 394–425 and 485–512; these read TTPT…PVVK and AHHY…HTRH. A phosphoserine mark is found at S593 and S604.

The protein belongs to the pannexin family. In terms of assembly, homoheptameric. Post-translationally, S-palmitoylated in neural stem and progenitor cells. Cleaved by CASP3 and CASP7 during apoptosis. Cleavage has no effect on it function. In terms of tissue distribution, expression is enriched in central nervous system. Expressed in suprabasal layers of skin epidermis. As to expression, more aboundantly expressed in skin.

The protein resides in the cell membrane. The protein localises to the golgi apparatus membrane. It is found in the endoplasmic reticulum membrane. It catalyses the reaction ATP(in) = ATP(out). The catalysed reaction is chloride(in) = chloride(out). It carries out the reaction iodide(out) = iodide(in). The enzyme catalyses Na(+)(in) = Na(+)(out). It catalyses the reaction D-gluconate(in) = D-gluconate(out). Ion channel with a slight anion preference. Also able to release ATP. Plays a role in regulating neurogenesis and apoptosis in keratinocytes. The polypeptide is Pannexin-2 (Panx2) (Mus musculus (Mouse)).